The chain runs to 589 residues: MPPSGRFDRTIALAGTGHLKIGNFVIKETIGKGAFGAVKRGTHIQTGYDVAIKILNRGRMKGLGTVNKTRNEIDNLQKLTHPHITRLFRVISTPSDIFLVMELVSGGELFSYITRKGALPIRESRRYFQQIISGVSYCHNHMIVHRDLKPENLLLDANKNIKIADFGLSNYMTDGDLLSTACGSPNYAAPELISNKLYVGPEVDLWSCGVILYAMLCGTLPFDDQNVPTLFAKIKSGRYTVPYSMEKQAADLISTMLQVDPVKRADVKRIVNHSWFRIDLPYYLFPECENESSIVDIDVVQSVAEKFDVKEEDVTGALLAEDHHHFLCIAYRLEVNHKRNADESSQKAMEDFWEIGKTMKMGSTSLPVGATTKTNVGRKILEGLKKEQKKLTWNLGIRACLDPVETMKHVFLSLKSVDMEWKVLSMYHIIVRSKPTPINPDPVKVSLQLFALDKKENNKGYLLDFKGLTEDEEAVPPSRCRSRAASVSVTLAKSKSDLNGNSSKVPMSPLSPMSPISPSVNIPKVRVDDADASLKSSLNSSIYMADIENSMESLDEVSTQSSEPEAPIRSQTMEFFATCHIIMQALLAE.

Positions 24-276 (FVIKETIGKG…VKRIVNHSWF (253 aa)) constitute a Protein kinase domain. ATP-binding positions include 30–38 (IGKGAFGAV) and K53. D147 serves as the catalytic Proton acceptor.

Belongs to the protein kinase superfamily. CAMK Ser/Thr protein kinase family. SNF1 subfamily.

It carries out the reaction L-seryl-[protein] + ATP = O-phospho-L-seryl-[protein] + ADP + H(+). It catalyses the reaction L-threonyl-[protein] + ATP = O-phospho-L-threonyl-[protein] + ADP + H(+). In terms of biological role, probably does not act as a sensor that couples lifespan to information about energy levels and insulin-like signals. Together with aak-2, involved in the establishment of germline stem cell (GSC) quiescence during dauer development. Plays a role in the maintenance of glycogen stores which are necessary for resistance to hyperosmotic stress. This is 5'-AMP-activated protein kinase catalytic subunit alpha-1 (aak-1) from Caenorhabditis elegans.